The chain runs to 1050 residues: DNA polymerase I A, chloroplastic/mitochondrial (1050 aa).

A chloroplast and mitochondrion-targeting transit peptide spans 1-91 (MAMGVSLTSH…VVFNGEWELR (91 aa)). A disordered region spans residues 202 to 240 (PRKGLDVGDNMDVNPKGEGIQRPLISDKSSGTANGNKNT). Polar residues predominate over residues 228–240 (DKSSGTANGNKNT). Residues 312 to 490 (ELICFSIYCG…LYESMTKKLQ (179 aa)) enclose the 3'-5' exonuclease domain. Residues 673 to 694 (VVEDDDVETSETQKSKTDDETD) form a disordered region. The polymerase stretch occupies residues 717-1048 (AIASLCEVCS…DAKCAQNWYA (332 aa)).

Belongs to the DNA polymerase type-A family. Expressed in shoot apical meristem.

The protein resides in the plastid. Its subcellular location is the chloroplast. It localises to the mitochondrion. The catalysed reaction is DNA(n) + a 2'-deoxyribonucleoside 5'-triphosphate = DNA(n+1) + diphosphate. Its activity is regulated as follows. Not inhibited by aphidicolin. In terms of biological role, in addition to polymerase activity, this DNA polymerase exhibits 5'-3' exonuclease activity. Required for DNA replication and accumulation in plastids and mitochondria. May be required for DNA repair in both organelles. The sequence is that of DNA polymerase I A, chloroplastic/mitochondrial (POLIA) from Arabidopsis thaliana (Mouse-ear cress).